We begin with the raw amino-acid sequence, 456 residues long: Alcohol acyltransferase 1 (456 aa).

Catalysis depends on proton acceptor residues histidine 166 and aspartate 382.

This sequence belongs to the plant acyltransferase family.

Functionally, involved in the biosynthesis of volatile esters which confer kiwifruit flavor. Alcohol acyl transferase that can use a wide range of alcohols as substrate to produce esters. This is Alcohol acyltransferase 1 from Actinidia chinensis var. chinensis (Chinese soft-hair kiwi).